The sequence spans 324 residues: tRNA-cytidine(32) 2-sulfurtransferase (324 aa).

The segment at 1–26 (MQDLIDSPTAARTPAEEKIRHEGNKL) is disordered. Over residues 14–26 (PAEEKIRHEGNKL) the composition is skewed to basic and acidic residues. Residues 55-60 (SGGKDS) carry the PP-loop motif motif. [4Fe-4S] cluster-binding residues include Cys-130, Cys-133, and Cys-221. The tract at residues 278–310 (RPDANGDTAFDPIDPEDPREDAGDACASSPADG) is disordered.

Belongs to the TtcA family. In terms of assembly, homodimer. Mg(2+) is required as a cofactor. The cofactor is [4Fe-4S] cluster.

It is found in the cytoplasm. The enzyme catalyses cytidine(32) in tRNA + S-sulfanyl-L-cysteinyl-[cysteine desulfurase] + AH2 + ATP = 2-thiocytidine(32) in tRNA + L-cysteinyl-[cysteine desulfurase] + A + AMP + diphosphate + H(+). The protein operates within tRNA modification. In terms of biological role, catalyzes the ATP-dependent 2-thiolation of cytidine in position 32 of tRNA, to form 2-thiocytidine (s(2)C32). The sulfur atoms are provided by the cysteine/cysteine desulfurase (IscS) system. The chain is tRNA-cytidine(32) 2-sulfurtransferase from Bordetella petrii (strain ATCC BAA-461 / DSM 12804 / CCUG 43448).